The following is a 454-amino-acid chain: tRNA modification GTPase MnmE (454 aa).

The (6S)-5-formyl-5,6,7,8-tetrahydrofolate site is built by arginine 23, glutamate 80, and lysine 120. The TrmE-type G domain maps to 216–377 (GMKVVIAGRP…LRNHLKQSMG (162 aa)). Position 226 (asparagine 226) interacts with K(+). GTP-binding positions include 226-231 (NAGKSS), 245-251 (TDIAGTT), 270-273 (DTAG), 335-338 (NKAD), and 358-360 (SAR). Serine 230 provides a ligand contact to Mg(2+). The K(+) site is built by threonine 245, isoleucine 247, and threonine 250. Residue threonine 251 coordinates Mg(2+). Lysine 454 serves as a coordination point for (6S)-5-formyl-5,6,7,8-tetrahydrofolate.

Belongs to the TRAFAC class TrmE-Era-EngA-EngB-Septin-like GTPase superfamily. TrmE GTPase family. In terms of assembly, homodimer. Heterotetramer of two MnmE and two MnmG subunits. Requires K(+) as cofactor.

Its subcellular location is the cytoplasm. In terms of biological role, exhibits a very high intrinsic GTPase hydrolysis rate. Involved in the addition of a carboxymethylaminomethyl (cmnm) group at the wobble position (U34) of certain tRNAs, forming tRNA-cmnm(5)s(2)U34. This Shigella dysenteriae serotype 1 (strain Sd197) protein is tRNA modification GTPase MnmE.